Reading from the N-terminus, the 523-residue chain is Effector protein hopAB1 (523 aa).

3 disordered regions span residues 1 to 94 (MPGI…EAQQ), 165 to 223 (VRQQ…QGLD), and 299 to 320 (RQTTTNSPELPPLASSAESGRR). Basic and acidic residues predominate over residues 18-31 (TDGEPVTEREHDSS). Residues 181 to 194 (SSSGSSQRSLIGRS) show a composition bias toward low complexity.

This sequence belongs to the HopAB family.

The protein localises to the secreted. Its function is as follows. Effector protein that plays different roles depending on the species and plant cultivars that interact with the pathogen. Acts as a virulence determinant by enhancing the development of disease symptoms and bacterial growth. Acts as an avirulence factor by eliciting hypersensitive response (HR) and plant resistance. The sequence is that of Effector protein hopAB1 (hopAB1) from Pseudomonas savastanoi pv. glycinea (Pseudomonas syringae pv. glycinea).